Here is a 188-residue protein sequence, read N- to C-terminus: dCTP deaminase (188 aa).

DCTP is bound by residues 111–116, 135–137, Gln-156, Tyr-170, Lys-179, and Gln-180; these read KSTYAR and TLE. Residue Glu-137 is the Proton donor/acceptor of the active site.

It belongs to the dCTP deaminase family. Homotrimer.

It catalyses the reaction dCTP + H2O + H(+) = dUTP + NH4(+). It functions in the pathway pyrimidine metabolism; dUMP biosynthesis; dUMP from dCTP (dUTP route): step 1/2. Catalyzes the deamination of dCTP to dUTP. In Rickettsia typhi (strain ATCC VR-144 / Wilmington), this protein is dCTP deaminase.